A 257-amino-acid polypeptide reads, in one-letter code: Imidazole glycerol phosphate synthase subunit HisF (257 aa).

Residues aspartate 12 and aspartate 131 contribute to the active site.

The protein belongs to the HisA/HisF family. Heterodimer of HisH and HisF.

The protein localises to the cytoplasm. It catalyses the reaction 5-[(5-phospho-1-deoxy-D-ribulos-1-ylimino)methylamino]-1-(5-phospho-beta-D-ribosyl)imidazole-4-carboxamide + L-glutamine = D-erythro-1-(imidazol-4-yl)glycerol 3-phosphate + 5-amino-1-(5-phospho-beta-D-ribosyl)imidazole-4-carboxamide + L-glutamate + H(+). It functions in the pathway amino-acid biosynthesis; L-histidine biosynthesis; L-histidine from 5-phospho-alpha-D-ribose 1-diphosphate: step 5/9. Functionally, IGPS catalyzes the conversion of PRFAR and glutamine to IGP, AICAR and glutamate. The HisF subunit catalyzes the cyclization activity that produces IGP and AICAR from PRFAR using the ammonia provided by the HisH subunit. This Burkholderia pseudomallei (strain 1106a) protein is Imidazole glycerol phosphate synthase subunit HisF.